Here is an 88-residue protein sequence, read N- to C-terminus: Large ribosomal subunit protein bL27 (88 aa).

The disordered stretch occupies residues 1-24 (MAHKKAGGSSRNGRDSEGRRLGVK).

It belongs to the bacterial ribosomal protein bL27 family.

The polypeptide is Large ribosomal subunit protein bL27 (Methylobacterium radiotolerans (strain ATCC 27329 / DSM 1819 / JCM 2831 / NBRC 15690 / NCIMB 10815 / 0-1)).